The following is a 409-amino-acid chain: Protein naked cuticle homolog 2-like (409 aa).

G2 is lipidated: N-myristoyl glycine. One can recognise an EF-hand domain in the interval 109 to 144 (AEDNRQEWVFTLYDFDNSGKVTKEDMSSLMHTIYDV). Residues D122, D124, S126, K128, and D133 each coordinate Ca(2+). Disordered regions lie at residues 166–224 (VTPE…YCVD), 243–315 (TSRF…RFPG), 346–367 (NHTHAHTPSGLQHSHSRRIRSR), and 388–409 (RHEHHHHHEHHHHHHYHHYHQT). Basic and acidic residues-rich tracts occupy residues 171 to 185 (AARRRDATHTERETS) and 193 to 224 (VRSEEHRSADRRQSTHIRGQTEAHEGNHYCVD). Positions 247-268 (DSSSPDADQDPPSRSSHSQSRP) are enriched in low complexity. Residues 389-409 (HEHHHHHEHHHHHHYHHYHQT) show a composition bias toward basic residues.

Belongs to the NKD family.

The protein resides in the cell membrane. The protein localises to the cytoplasm. In terms of biological role, cell autonomous antagonist of both the canonical and non-canonical Wnt signaling pathways. The chain is Protein naked cuticle homolog 2-like (nkd2l) from Danio rerio (Zebrafish).